The sequence spans 173 residues: NADH-ubiquinone oxidoreductase chain 6 (173 aa).

5 helical membrane passes run 1–21 (MTYF…AVAS), 27–47 (YGVV…LSLG), 48–68 (VSFV…VVFV), 87–107 (VVGY…VGGF), and 139–159 (CGVG…FVVL).

This sequence belongs to the complex I subunit 6 family.

Its subcellular location is the mitochondrion membrane. The catalysed reaction is a ubiquinone + NADH + 5 H(+)(in) = a ubiquinol + NAD(+) + 4 H(+)(out). Core subunit of the mitochondrial membrane respiratory chain NADH dehydrogenase (Complex I) that is believed to belong to the minimal assembly required for catalysis. Complex I functions in the transfer of electrons from NADH to the respiratory chain. The immediate electron acceptor for the enzyme is believed to be ubiquinone. The sequence is that of NADH-ubiquinone oxidoreductase chain 6 (MT-ND6) from Aethia pygmaea (Whiskered auklet).